Consider the following 217-residue polypeptide: Ribonuclease HII (217 aa).

An RNase H type-2 domain is found at 12–201 (DLVAGVDEVG…VRTAHEARAA (190 aa)). The a divalent metal cation site is built by D18, E19, and D110.

Belongs to the RNase HII family. Mn(2+) serves as cofactor. Requires Mg(2+) as cofactor.

It localises to the cytoplasm. It carries out the reaction Endonucleolytic cleavage to 5'-phosphomonoester.. Its function is as follows. Endonuclease that specifically degrades the RNA of RNA-DNA hybrids. This chain is Ribonuclease HII, found in Pseudomonas syringae pv. tomato (strain ATCC BAA-871 / DC3000).